The chain runs to 488 residues: 1-hydroxycarotenoid 3,4-desaturase (488 aa).

FAD contacts are provided by residues Glu-31, Lys-39, 55-56 (SL), Val-247, Asn-275, Leu-431, Gly-461, and 468-469 (GI).

The protein belongs to the carotenoid/retinoid oxidoreductase family. As to quaternary structure, monomer.

It carries out the reaction rhodopin + A = (3E)-3,4-didehydrorhodopin + AH2. It catalyses the reaction 1'-hydroxy-gamma-carotene + A = 1'-hydroxytorulene + AH2. The enzyme catalyses 1-hydroxy-all-trans-1,2-dihydro-neurosporene + A = demethylspheroidene + AH2. The catalysed reaction is 1,1'-dihydroxy-1,1',2,2'-tetrahydroneurosporene + A = 1'-hydroxy-demethylspheroidene + AH2. It carries out the reaction 1,1'-dihydroxy-1,1',2,2'-tetrahydrolycopene + A = 1,1'-dihydroxy-3,4-didehydro-1,2-dihydrolycopene + AH2. It participates in carotenoid biosynthesis. Catalyzes the introduction of a C-3,4 double bond into 1'-hydroxy-gamma-carotene and rhodopin (1-hydroxylycopene) to yield 1'-hydroxytorulene and (3E)-3,4-didehydrorhodopin, respectively. Can also 1-hydroxy-all-trans-1,2-dihydro-neurosporene, 1,1'-dihydroxy-1,1',2,2'-tetrahydroneurosporene and 1,1'-dihydroxy-1,1',2,2'-tetrahydrolycopene. Probably involved in the synthesis of myxol, a gamma-carotene derivative. May use FAD as a proton acceptor. The protein is 1-hydroxycarotenoid 3,4-desaturase of Flavobacterium sp. (strain P99-3).